We begin with the raw amino-acid sequence, 634 residues long: Putative ABC transporter ATP-binding protein MG015 homolog (634 aa).

Helical transmembrane passes span 54 to 74, 111 to 131, 189 to 209, 213 to 233, 296 to 316, and 325 to 345; these read VLYV…NSIL, LTIV…FNVA, VGGQ…ILFV, VIAL…FLFL, VFIY…SISI, and IPSF…IAAL. In terms of domain architecture, ABC transmembrane type-1 spans 54 to 364; it reads VLYVMVCAIF…IFSLWNLIQL (311 aa). The 235-residue stretch at 397–631 folds into the ABC transporter domain; sequence IRFEKVVFGY…NGFYARLKRS (235 aa). 430-437 provides a ligand contact to ATP; it reads GPTGAGKS.

Belongs to the ABC transporter superfamily.

The protein localises to the cell membrane. The protein is Putative ABC transporter ATP-binding protein MG015 homolog of Mycoplasma pneumoniae (strain ATCC 29342 / M129 / Subtype 1) (Mycoplasmoides pneumoniae).